Consider the following 511-residue polypeptide: Ribonuclease Y (511 aa).

The helical transmembrane segment at 3-23 (VTIVASIACFIVGGILSYVLF) threads the bilayer. The 61-residue stretch at 201–261 (SVTVFHIESD…VRREIARLAL (61 aa)) folds into the KH domain. Residues 327-420 (LLQHARETAN…VQVCDAISGA (94 aa)) enclose the HD domain.

This sequence belongs to the RNase Y family.

The protein resides in the cell membrane. Endoribonuclease that initiates mRNA decay. The chain is Ribonuclease Y from Bacteroides fragilis (strain ATCC 25285 / DSM 2151 / CCUG 4856 / JCM 11019 / LMG 10263 / NCTC 9343 / Onslow / VPI 2553 / EN-2).